Consider the following 79-residue polypeptide: D-alanyl carrier protein (79 aa).

The region spanning 1–77 (MDTKQAVLDI…KIIAKVESLR (77 aa)) is the Carrier domain. S35 is modified (O-(pantetheine 4'-phosphoryl)serine).

This sequence belongs to the DltC family. 4'-phosphopantetheine is transferred from CoA to a specific serine of apo-DCP.

Its subcellular location is the cytoplasm. Its pathway is cell wall biogenesis; lipoteichoic acid biosynthesis. Carrier protein involved in the D-alanylation of lipoteichoic acid (LTA). The loading of thioester-linked D-alanine onto DltC is catalyzed by D-alanine--D-alanyl carrier protein ligase DltA. The DltC-carried D-alanyl group is further transferred to cell membrane phosphatidylglycerol (PG) by forming an ester bond, probably catalyzed by DltD. D-alanylation of LTA plays an important role in modulating the properties of the cell wall in Gram-positive bacteria, influencing the net charge of the cell wall. The chain is D-alanyl carrier protein from Lactobacillus johnsonii (strain CNCM I-12250 / La1 / NCC 533).